Reading from the N-terminus, the 332-residue chain is DNA-directed RNA polymerase subunit alpha (332 aa).

Residues 1–231 are alpha N-terminal domain (alpha-NTD); that stretch reads MQTNLLKPKT…EQLAVFAQLD (231 aa). Positions 252–332 are alpha C-terminal domain (alpha-CTD); that stretch reads FDPILLRPVD…NWPPAGLEKR (81 aa).

It belongs to the RNA polymerase alpha chain family. As to quaternary structure, homodimer. The RNAP catalytic core consists of 2 alpha, 1 beta, 1 beta' and 1 omega subunit. When a sigma factor is associated with the core the holoenzyme is formed, which can initiate transcription.

The catalysed reaction is RNA(n) + a ribonucleoside 5'-triphosphate = RNA(n+1) + diphosphate. DNA-dependent RNA polymerase catalyzes the transcription of DNA into RNA using the four ribonucleoside triphosphates as substrates. This is DNA-directed RNA polymerase subunit alpha from Delftia acidovorans (strain DSM 14801 / SPH-1).